Here is a 206-residue protein sequence, read N- to C-terminus: Large ribosomal subunit protein mL62 (206 aa).

The N-terminal 29 residues, 1-29 (MAAARCLRWGLSRAEAWLLPPPTSCCHRA), are a transit peptide targeting the mitochondrion. At glutamine 90 the chain carries N5-methylglutamine.

It belongs to the prokaryotic/mitochondrial release factor family. Mitochondrion-specific ribosomal protein mL62 subfamily. As to quaternary structure, component of the mitochondrial ribosome large subunit (39S) which comprises a 16S rRNA and about 50 distinct proteins. Methylation of glutamine in the GGQ triplet by HEMK1.

It is found in the mitochondrion. The enzyme catalyses an N-acyl-L-alpha-aminoacyl-tRNA + H2O = an N-acyl-L-amino acid + a tRNA + H(+). Its function is as follows. Essential peptidyl-tRNA hydrolase component of the mitochondrial large ribosomal subunit. Acts as a codon-independent translation release factor that has lost all stop codon specificity and directs the termination of translation in mitochondrion, possibly in case of abortive elongation. May be involved in the hydrolysis of peptidyl-tRNAs that have been prematurely terminated and thus in the recycling of stalled mitochondrial ribosomes. This is Large ribosomal subunit protein mL62 from Bos taurus (Bovine).